The sequence spans 612 residues: Lysophospholipase (612 aa).

An N-terminal signal peptide occupies residues 1–9 (DITFAGVQR). Positions 24-571 (SCPASRPTVR…DRYCWNGTVN (548 aa)) constitute a PLA2c domain. 17 N-linked (GlcNAc...) asparagine glycosylation sites follow: asparagine 41, asparagine 81, asparagine 116, asparagine 150, asparagine 223, asparagine 267, asparagine 306, asparagine 335, asparagine 427, asparagine 440, asparagine 446, asparagine 477, asparagine 498, asparagine 526, asparagine 532, asparagine 567, and asparagine 571.

The protein belongs to the lysophospholipase family. In terms of processing, N-glycosylated.

Its subcellular location is the secreted. It catalyses the reaction a 1-acyl-sn-glycero-3-phosphocholine + H2O = sn-glycerol 3-phosphocholine + a fatty acid + H(+). Functionally, catalyzes the release of fatty acids from lysophospholipids. In Penicillium chrysogenum (Penicillium notatum), this protein is Lysophospholipase.